The chain runs to 285 residues: NAD kinase (285 aa).

D68 acts as the Proton acceptor in catalysis. NAD(+) is bound by residues 68-69, 142-143, R153, K170, D172, 183-188, and Q242; these read DG, ND, and TAYNLS.

The protein belongs to the NAD kinase family. A divalent metal cation is required as a cofactor.

It localises to the cytoplasm. The enzyme catalyses NAD(+) + ATP = ADP + NADP(+) + H(+). Involved in the regulation of the intracellular balance of NAD and NADP, and is a key enzyme in the biosynthesis of NADP. Catalyzes specifically the phosphorylation on 2'-hydroxyl of the adenosine moiety of NAD to yield NADP. This chain is NAD kinase, found in Syntrophotalea carbinolica (strain DSM 2380 / NBRC 103641 / GraBd1) (Pelobacter carbinolicus).